The sequence spans 333 residues: Protein-methionine-sulfoxide reductase catalytic subunit MsrP (333 aa).

The segment at residues 1-43 (MSKQRKLTEADVTPESVFYQRRKVLQALGITAASLALPHNAQA) is a signal peptide (tat-type signal). Residues Asn-87, 90 to 91 (YE), Cys-145, Thr-180, Asn-232, Arg-237, and 248 to 250 (GIK) each bind Mo-molybdopterin.

The protein belongs to the MsrP family. Heterodimer of a catalytic subunit (MsrP) and a heme-binding subunit (MsrQ). Mo-molybdopterin is required as a cofactor. Post-translationally, predicted to be exported by the Tat system. The position of the signal peptide cleavage has not been experimentally proven.

The protein localises to the periplasm. The enzyme catalyses L-methionyl-[protein] + a quinone + H2O = L-methionyl-(S)-S-oxide-[protein] + a quinol. It catalyses the reaction L-methionyl-[protein] + a quinone + H2O = L-methionyl-(R)-S-oxide-[protein] + a quinol. Part of the MsrPQ system that repairs oxidized periplasmic proteins containing methionine sulfoxide residues (Met-O), using respiratory chain electrons. Thus protects these proteins from oxidative-stress damage caused by reactive species of oxygen and chlorine generated by the host defense mechanisms. MsrPQ is essential for the maintenance of envelope integrity under bleach stress, rescuing a wide series of structurally unrelated periplasmic proteins from methionine oxidation. The catalytic subunit MsrP is non-stereospecific, being able to reduce both (R-) and (S-) diastereoisomers of methionine sulfoxide. The polypeptide is Protein-methionine-sulfoxide reductase catalytic subunit MsrP (Serratia proteamaculans (strain 568)).